A 33-amino-acid polypeptide reads, in one-letter code: Cytochrome b6-f complex subunit 8 (33 aa).

Residues 2-22 form a helical membrane-spanning segment; it reads LFTFAWASLAAIFTFSIAMVV.

Belongs to the PetN family. In terms of assembly, the 4 large subunits of the cytochrome b6-f complex are cytochrome b6, subunit IV (17 kDa polypeptide, PetD), cytochrome f and the Rieske protein, while the 4 small subunits are PetG, PetL, PetM and PetN. The complex functions as a dimer.

It localises to the cellular thylakoid membrane. Its function is as follows. Component of the cytochrome b6-f complex, which mediates electron transfer between photosystem II (PSII) and photosystem I (PSI), cyclic electron flow around PSI, and state transitions. The polypeptide is Cytochrome b6-f complex subunit 8 (Prochlorococcus marinus (strain SARG / CCMP1375 / SS120)).